The following is a 1019-amino-acid chain: Pleckstrin homology domain-containing family M member 2 (1019 aa).

M1 bears the N-acetylmethionine mark. Positions 1–310 (MEPGEVKDRI…LDPPDACTEL (310 aa)) are interaction with KIF5B. An RUN domain is found at 36-158 (RNHDKVLQRL…IRFELDLDAP (123 aa)). Disordered stretches follow at residues 230 to 458 (SVPS…SEGL), 471 to 525 (SPST…REAQ), and 557 to 581 (QPSP…SEMV). Composition is skewed to polar residues over residues 243–272 (DTVS…QNPF) and 279–291 (TVSS…VHTT). Residues 315–327 (VTKKKKIGKKKKS) are compositionally biased toward basic residues. Polar residues predominate over residues 417-427 (LNGQLDPSTWC). Residue S441 is modified to Phosphoserine. Positions 516-525 (PLEDTTREAQ) are enriched in basic and acidic residues. An interaction with sifA region spans residues 762-885 (PCHCSPPEGT…VIPQGVAPSP (124 aa)). One can recognise a PH domain in the interval 771-873 (TITKEGMLHY…WMQHLCQAVS (103 aa)).

Interacts with KLC2 (via TPR repeats). Interacts with KIF5B. Interacts with BORCS5. Interacts (via RUN domain) with ARL8B (GTP-bound form); PLEKHM1 and PLEKHM2 compete for interaction with ARL8B. Interacts with ARL8A. In terms of assembly, (Microbial infection) Interacts with the S.typhimurium sifA protein; required for S.typhimurium infection.

It localises to the cytoplasm. Its subcellular location is the lysosome membrane. Plays a role in lysosomes movement and localization at the cell periphery acting as an effector of ARL8B. Required for ARL8B to exert its effects on lysosome location, recruits kinesin-1 to lysosomes and hence direct their movement toward microtubule plus ends. Binding to ARL8B provides a link from lysosomal membranes to plus-end-directed motility. Critical factor involved in NK cell-mediated cytotoxicity. Drives the polarization of cytolytic granules and microtubule-organizing centers (MTOCs) toward the immune synapse between effector NK lymphocytes and target cells. Required for maintenance of the Golgi apparatus organization. May play a role in membrane tubulation. This is Pleckstrin homology domain-containing family M member 2 from Homo sapiens (Human).